The sequence spans 926 residues: Eukaryotic translation initiation factor 3 subunit C (926 aa).

Disordered regions lie at residues 1 to 27 (MSRF…PKAA), 157 to 251 (ASYK…NDGT), and 266 to 300 (EKAS…EEGG). Over residues 200–210 (KPQEEEKKAPE) the composition is skewed to basic and acidic residues. Acidic residues predominate over residues 220–235 (DEESESDDDEDSEDWA). A compositionally biased stretch (basic residues) spans 274-283 (DDRRRRHKKK). Positions 287 to 299 (EEEAEEEGEAEEG) are enriched in acidic residues. In terms of domain architecture, PCI spans 672-848 (FHMHINLELL…QTVVMHRTEP (177 aa)). The span at 890–919 (GGYQQKQGYQRGDQKGGYQQKQNYQRGGYR) shows a compositional bias: low complexity. The disordered stretch occupies residues 890–926 (GGYQQKQGYQRGDQKGGYQQKQNYQRGGYRNQNQSSY).

The protein belongs to the eIF-3 subunit C family. In terms of assembly, component of the eukaryotic translation initiation factor 3 (eIF-3) complex, which is composed of 13 subunits: eif3a, eif3b, eif3c, eif3d, eif3e, eif3f, eif3g, eif3h, eif3i, eif3j, eif3k, eif3l and eif3m.

It is found in the cytoplasm. In terms of biological role, component of the eukaryotic translation initiation factor 3 (eIF-3) complex, which is involved in protein synthesis of a specialized repertoire of mRNAs and, together with other initiation factors, stimulates binding of mRNA and methionyl-tRNAi to the 40S ribosome. The eIF-3 complex specifically targets and initiates translation of a subset of mRNAs involved in cell proliferation. The chain is Eukaryotic translation initiation factor 3 subunit C (eif3c) from Danio rerio (Zebrafish).